A 1407-amino-acid polypeptide reads, in one-letter code: DNA-directed RNA polymerase subunit beta' (1407 aa).

Zn(2+) is bound by residues Cys-70, Cys-72, Cys-85, and Cys-88. Mg(2+)-binding residues include Asp-460, Asp-462, and Asp-464. Zn(2+) contacts are provided by Cys-814, Cys-888, Cys-895, and Cys-898.

Belongs to the RNA polymerase beta' chain family. As to quaternary structure, the RNAP catalytic core consists of 2 alpha, 1 beta, 1 beta' and 1 omega subunit. When a sigma factor is associated with the core the holoenzyme is formed, which can initiate transcription. The cofactor is Mg(2+). Zn(2+) is required as a cofactor.

It catalyses the reaction RNA(n) + a ribonucleoside 5'-triphosphate = RNA(n+1) + diphosphate. In terms of biological role, DNA-dependent RNA polymerase catalyzes the transcription of DNA into RNA using the four ribonucleoside triphosphates as substrates. This Salmonella paratyphi B (strain ATCC BAA-1250 / SPB7) protein is DNA-directed RNA polymerase subunit beta'.